The following is a 144-amino-acid chain: uncharacterized protein (144 aa).

Positions Glu23–Lys82 form a coiled coil.

This is an uncharacterized protein from Acanthamoeba polyphaga mimivirus (APMV).